The chain runs to 396 residues: Ribosomal RNA large subunit methyltransferase I (396 aa).

A PUA domain is found at S2 to R81.

Belongs to the methyltransferase superfamily. RlmI family.

It localises to the cytoplasm. The catalysed reaction is cytidine(1962) in 23S rRNA + S-adenosyl-L-methionine = 5-methylcytidine(1962) in 23S rRNA + S-adenosyl-L-homocysteine + H(+). In terms of biological role, specifically methylates the cytosine at position 1962 (m5C1962) of 23S rRNA. The chain is Ribosomal RNA large subunit methyltransferase I from Escherichia coli O127:H6 (strain E2348/69 / EPEC).